Consider the following 82-residue polypeptide: Small ribosomal subunit protein bS16 (82 aa).

The protein belongs to the bacterial ribosomal protein bS16 family.

The protein is Small ribosomal subunit protein bS16 of Pasteurella multocida (strain Pm70).